We begin with the raw amino-acid sequence, 1069 residues long: Calcium-transporting ATPase 10, plasma membrane-type (1069 aa).

The disordered stretch occupies residues 1-29 (MSGQFNNSPRGEDKDVEAGTSSFTEYEDS). The residue at position 2 (Ser2) is an N-acetylserine. At 2-180 (SGQFNNSPRG…NTYPQKKGRS (179 aa)) the chain is on the cytoplasmic side. Residues 42 to 53 (ERLRRWRQAALV) are interaction with calmodulin. A helical membrane pass occupies residues 181 to 201 (FWRFVWEASQDLTLIILIVAA). Topologically, residues 202–219 (VASLALGIKTEGIEKGWY) are lumenal. Residues 220-240 (DGISIAFAVLLVIVVTATSDY) form a helical membrane-spanning segment. Over 241–369 (RQSLQFQNLN…GGETPLQVRL (129 aa)) the chain is Cytoplasmic. A helical transmembrane segment spans residues 370–389 (NGVATFIGIVGLTVAGVVLF). Over 390 to 426 (VLVVRYFTGHTKNEQGGPQFIGGKTKFEHVLDDLVEI) the chain is Lumenal. Residues 427 to 444 (FTVAVTIVVVAVPEGLPL) form a helical membrane-spanning segment. The Cytoplasmic segment spans residues 445–844 (AVTLTLAYSM…RWGRSVYANI (400 aa)). The 4-aspartylphosphate intermediate role is filled by Asp482. Asp789 and Asp793 together coordinate Mg(2+). The chain crosses the membrane as a helical span at residues 845 to 863 (QKFIQFQLTVNVAALVINV). Residues 864–874 (VAAISAGEVPL) lie on the Lumenal side of the membrane. The helical transmembrane segment at 875–895 (TAVQLLWVNLIMDTLGALALA) threads the bilayer. At 896–915 (TEPPTDHLMDRAPVGRREPL) the chain is on the cytoplasmic side. Residues 916-938 (ITNIMWRNLFIQAMYQVTVLLIL) form a helical membrane-spanning segment. Topologically, residues 939 to 951 (NFRGISILHLKSK) are lumenal. A helical transmembrane segment spans residues 952 to 973 (PNAERVKNTVIFNAFVICQVFN). Over 974–991 (EFNARKPDEINIFRGVLR) the chain is Cytoplasmic. A helical transmembrane segment spans residues 992–1013 (NHLFVGIISITIVLQVVIVEFL). At 1014 to 1023 (GTFASTTKLD) the chain is on the lumenal side. Residues 1024–1045 (WEMWLVCIGIGSISWPLAVIGK) form a helical membrane-spanning segment. Topologically, residues 1046–1069 (LIPVPETPVSQYFRINRWRRNSSG) are cytoplasmic.

This sequence belongs to the cation transport ATPase (P-type) (TC 3.A.3) family. Type IIB subfamily.

The protein localises to the membrane. It catalyses the reaction Ca(2+)(in) + ATP + H2O = Ca(2+)(out) + ADP + phosphate + H(+). Activated by calmodulin. Its function is as follows. This magnesium-dependent enzyme catalyzes the hydrolysis of ATP coupled with the translocation of calcium from the cytosol into the endoplasmic reticulum. The polypeptide is Calcium-transporting ATPase 10, plasma membrane-type (ACA10) (Arabidopsis thaliana (Mouse-ear cress)).